We begin with the raw amino-acid sequence, 347 residues long: Putative ORC1-type DNA replication protein 1 (347 aa).

ATP-binding positions include 34-38, Tyr167, and Arg179; that span reads TGKTV.

It belongs to the CDC6/cdc18 family.

Its function is as follows. Involved in regulation of DNA replication. Has no effect on MCM helicase activity, either stimulatory or inhibitory. Does not bind DNA. The polypeptide is Putative ORC1-type DNA replication protein 1 (cdc6-1) (Thermoplasma acidophilum (strain ATCC 25905 / DSM 1728 / JCM 9062 / NBRC 15155 / AMRC-C165)).